Consider the following 199-residue polypeptide: UPF0301 protein Vapar_4617 (199 aa).

The protein belongs to the UPF0301 (AlgH) family.

This Variovorax paradoxus (strain S110) protein is UPF0301 protein Vapar_4617.